The sequence spans 42 residues: Beta-2-microglobulin (42 aa).

One can recognise an Ig-like C1-type domain in the interval 5-42 (PKIQVYSRHPAZBGKPBFLBCYVSGFHPXZIZIBLLKB).

As to quaternary structure, heterodimer of an alpha chain and a beta chain. Beta-2-microglobulin is the beta-chain of major histocompatibility complex class I molecules.

The protein resides in the secreted. Functionally, component of the class I major histocompatibility complex (MHC). Involved in the presentation of peptide antigens to the immune system. The protein is Beta-2-microglobulin (B2M) of Canis lupus familiaris (Dog).